The following is a 359-amino-acid chain: MSFFNMVKPLIYKTDPELAHDLVDLAMRTARRCPLFFNPLVKANFVDDVMLHQKIWDLEFKNPVGVAAGFDKHATMVYGWPALGFGWGEIGAVTPKPQPGNEKPRAWRHIEYEAVQNAYGFNNEGVEVIKKRLKKIYPFILPIGANIGKNKTTPEERAVEDYKILVNELKDVVDFFVVNVSSPNTPGLRDLLNAEFISSLFGELKNLTDKPILIKFSPDMEDELIINLANYSVLAGADGIIVTNTTVNYDLVNSEIKRGGISGKPLAQRSYEVLRIVAGEVFGKVPIISVGGIDSAEEAYKRIKAGASLLQVYTAIIYKGPGIVGEINRGLIELLKKDGYSHISEAIGVEIPKKLENKA.

FMN is bound by residues 68-72 and Ala-92; that span reads AGFDK. Lys-72 lines the substrate pocket. Residue 117–121 coordinates substrate; sequence NAYGF. Residues Asn-146 and Asn-179 each contribute to the FMN site. Asn-179 provides a ligand contact to substrate. Ser-182 (nucleophile) is an active-site residue. Asn-184 serves as a coordination point for substrate. FMN-binding residues include Lys-215 and Thr-243. 244–245 contacts substrate; that stretch reads NT. FMN is bound by residues Gly-263, Gly-292, and 313-314; that span reads YT.

It belongs to the dihydroorotate dehydrogenase family. Type 2 subfamily. Monomer. FMN serves as cofactor.

Its subcellular location is the cell membrane. The catalysed reaction is (S)-dihydroorotate + a quinone = orotate + a quinol. The protein operates within pyrimidine metabolism; UMP biosynthesis via de novo pathway; orotate from (S)-dihydroorotate (quinone route): step 1/1. Its function is as follows. Catalyzes the conversion of dihydroorotate to orotate with quinone as electron acceptor. In Nautilia profundicola (strain ATCC BAA-1463 / DSM 18972 / AmH), this protein is Dihydroorotate dehydrogenase (quinone).